A 279-amino-acid chain; its full sequence is Lipid phosphate phosphatase epsilon 1, chloroplastic (279 aa).

Residues 1 to 88 (MAASSSLLLL…SFINNSSEIR (88 aa)) constitute a chloroplast transit peptide. Helical transmembrane passes span 126-142 (LWAVIGSISNSALSVVL), 164-184 (SHAQSISFISVFAVLSVMEWL), 185-205 (GTNGVSLFLSGLILALGSYFI), 219-239 (VVVGAIVGSLFCILWYTMWNS), and 255-275 (VFLFAATFALAFAAYVVLNWF).

This sequence belongs to the PA-phosphatase related phosphoesterase family. In terms of tissue distribution, expressed in root tips, root branch points, cotyledons and leaves.

It localises to the plastid. The protein localises to the chloroplast inner membrane. Inhibited by Mg(2+). Its function is as follows. Exhibits phosphatidate phosphatase (PAP) activity in vitro. May play a secondary role as PAP in plastids. The polypeptide is Lipid phosphate phosphatase epsilon 1, chloroplastic (LPPE1) (Arabidopsis thaliana (Mouse-ear cress)).